Consider the following 259-residue polypeptide: UPF0246 protein PputW619_0896 (259 aa).

It belongs to the UPF0246 family.

The sequence is that of UPF0246 protein PputW619_0896 from Pseudomonas putida (strain W619).